We begin with the raw amino-acid sequence, 461 residues long: tRNA modification GTPase MnmE (461 aa).

(6S)-5-formyl-5,6,7,8-tetrahydrofolate is bound by residues R23, E88, and R127. A TrmE-type G domain is found at 223–383 (GLNTVIVGKP…LKECIKNLFF (161 aa)). N233 provides a ligand contact to K(+). Residues 233–238 (NVGKSS), 252–258 (TEIPGTT), and 277–280 (DTAG) each bind GTP. S237 is a binding site for Mg(2+). Residues T252, I254, and T257 each contribute to the K(+) site. Position 258 (T258) interacts with Mg(2+). K461 is a binding site for (6S)-5-formyl-5,6,7,8-tetrahydrofolate.

Belongs to the TRAFAC class TrmE-Era-EngA-EngB-Septin-like GTPase superfamily. TrmE GTPase family. Homodimer. Heterotetramer of two MnmE and two MnmG subunits. Requires K(+) as cofactor.

Its subcellular location is the cytoplasm. Functionally, exhibits a very high intrinsic GTPase hydrolysis rate. Involved in the addition of a carboxymethylaminomethyl (cmnm) group at the wobble position (U34) of certain tRNAs, forming tRNA-cmnm(5)s(2)U34. The sequence is that of tRNA modification GTPase MnmE from Clostridium botulinum (strain Okra / Type B1).